Here is a 355-residue protein sequence, read N- to C-terminus: Thiamine thiazole synthase, chloroplastic (355 aa).

The transit peptide at 1–42 (MAAMATTASSLLKTSFAGARLPAAARNPTVSVAPRTGGAICN) directs the protein to the chloroplast. Substrate contacts are provided by residues Ala-96, 116-117 (EQ), Gly-124, and Val-189. Cys-218 bears the 2,3-didehydroalanine (Cys) mark. Residues Asp-220, His-235, Met-287, and 297–299 (RMG) contribute to the substrate site.

This sequence belongs to the THI4 family. As to quaternary structure, homooctamer. The cofactor is Fe cation. In terms of processing, during the catalytic reaction, a sulfide is transferred from Cys-218 to a reaction intermediate, generating a dehydroalanine residue.

It localises to the plastid. It is found in the chloroplast. The enzyme catalyses [ADP-thiazole synthase]-L-cysteine + glycine + NAD(+) = [ADP-thiazole synthase]-dehydroalanine + ADP-5-ethyl-4-methylthiazole-2-carboxylate + nicotinamide + 3 H2O + 2 H(+). Its function is as follows. Involved in biosynthesis of the thiamine precursor thiazole. Catalyzes the conversion of NAD and glycine to adenosine diphosphate 5-(2-hydroxyethyl)-4-methylthiazole-2-carboxylic acid (ADT), an adenylated thiazole intermediate. The reaction includes an iron-dependent sulfide transfer from a conserved cysteine residue of the protein to a thiazole intermediate. The enzyme can only undergo a single turnover, which suggests it is a suicide enzyme. May have additional roles in adaptation to various stress conditions and in DNA damage tolerance. Required fot thiamine accumulation and disease resistance toward the bacterial pathogen Xanthomonas oryzae pv oryzae (Xoo) and the fungal pathogen Magnaporthe oryzae. During infection by Xoo, functions positively in the defense pathway initiated by the resistance genes XA3 and XA26 by promoting thiamine synthesis. May function upstream of the defense-related proteins peroxidases, phenylalanine ammonia-lyases and pathogenesis-related proteins. In terms of biological role, (Microbial infection) During infection by Xanthomonas oryzae pv oryzae (Xoo), THI1 interacts with the type III effector virulence factor xadA from Xoo, which is an adhesin-like outer membrane protein. This probably attenuates the function of THI1 in defense response. The polypeptide is Thiamine thiazole synthase, chloroplastic (Oryza sativa subsp. japonica (Rice)).